We begin with the raw amino-acid sequence, 602 residues long: Arginine--tRNA ligase (602 aa).

The 'HIGH' region motif lies at Ala-124–Arg-134.

Belongs to the class-I aminoacyl-tRNA synthetase family.

It is found in the cytoplasm. It carries out the reaction tRNA(Arg) + L-arginine + ATP = L-arginyl-tRNA(Arg) + AMP + diphosphate. The polypeptide is Arginine--tRNA ligase (Halorubrum lacusprofundi (strain ATCC 49239 / DSM 5036 / JCM 8891 / ACAM 34)).